A 256-amino-acid chain; its full sequence is Protein YABBY 4 (256 aa).

The C4-type zinc finger occupies Cys-30–Cys-57. The tract at residues Ser-127 to Pro-168 is disordered.

Belongs to the YABBY family. In terms of tissue distribution, preferentially expressed in immature organs containing meristems and organ primordia. Expressed in phloem of developing vascular tissues of young seedling shoots. Expressed in the phloem of midvein vasculature of young leaves. Does not show polar expression pattern in leaf primordia.

Its subcellular location is the nucleus. In terms of biological role, seems to be associated with phloem cell differentiation. In Oryza sativa subsp. japonica (Rice), this protein is Protein YABBY 4 (YAB4).